A 387-amino-acid polypeptide reads, in one-letter code: TSC22 domain family protein 4 (387 aa).

Disordered stretches follow at residues 1–85 and 135–232; these read MSGG…GEPY and ISTP…RRDG. Residues 31–51 show a composition bias toward pro residues; it reads PVPPALAGPPPRLPNGDPNPD. At threonine 57 the chain carries Phosphothreonine. Phosphoserine occurs at positions 62 and 165. Threonine 183 is subject to Phosphothreonine. A phosphoserine mark is found at serine 187, serine 189, and serine 219. Threonine 223 is modified (phosphothreonine). Phosphoserine is present on residues serine 254, serine 258, and serine 271. Residues 336–357 are leucine-zipper; the sequence is LKEQIRDLAERNAALEQENGLL. Residue serine 362 is modified to Phosphoserine. The tract at residues 368-387 is disordered; it reads QLPSSGLPRLGPSAPNGPSI.

It belongs to the TSC-22/Dip/Bun family. In terms of assembly, forms a homodimer or heterodimer. Forms a heterodimer with TSC22D1 isoforms 1 and 2. Interacts with NRBP1. As to expression, expressed in the liver (at protein level). Expressed in Purkinje cells and proliferating cerebellar granular neurons (at protein level). Expressed in the cortex, medulla and papilla of the kidney.

It localises to the nucleus. It is found in the cytoplasm. Its subcellular location is the cell projection. The protein resides in the dendrite. The protein localises to the synapse. In terms of biological role, binds DNA and acts as a transcriptional repressor. Involved in the regulation of systematic glucose homeostasis and insulin sensitivity, via transcriptional repression of downstream insulin signaling targets such as OBP2A/LCN13. Acts as a negative regulator of lipogenic gene expression in hepatocytes and thereby mediates the control of very low-density lipoprotein release. May play a role in neurite elongation and survival. The protein is TSC22 domain family protein 4 of Mus musculus (Mouse).